We begin with the raw amino-acid sequence, 347 residues long: Palmitoyltransferase ZDHHC11 (347 aa).

At 1–46 (MKEMNICGINKNWVLPEAQENNVKKFLPRPLSRVNGWSPPLHSFQA) the chain is on the cytoplasmic side. The chain crosses the membrane as a helical span at residues 47–67 (ISWITYLAMSIVTFGIFIPFL). Residues 68-75 (PYSWKYAA) lie on the Lumenal side of the membrane. The helical transmembrane segment at 76-96 (NIVMGGVFIFHLIVHLIAITI) threads the bilayer. The Cytoplasmic portion of the chain corresponds to 97-170 (DPADTNVRLK…LNNCVGRRNY (74 aa)). Positions 128-178 (QYCHLCEVTASKKAKHCSACNKCVSGFDHHCKWLNNCVGRRNYWFFFWSVA) constitute a DHHC domain. The active-site S-palmitoyl cysteine intermediate is the C158. Residues 171 to 191 (WFFFWSVASAAVGILGVMIIL) form a helical membrane-spanning segment. The Lumenal portion of the chain corresponds to 192–234 (CYICIQYFVNPDELRTDPLYKEIISENTWLLFLSLWPVPVKTP). The chain crosses the membrane as a helical span at residues 235-255 (IVLSIAVMALLLAIASFVMLG). The Cytoplasmic portion of the chain corresponds to 256–347 (HLLIFHLYLI…SPPKICHSED (92 aa)). The span at 291-306 (ELPLQKKGDLPQEKSD) shows a compositional bias: basic and acidic residues. Positions 291–332 (ELPLQKKGDLPQEKSDNWAWPKSPPRVGSQKFPVSTLSPKSS) are disordered. A compositionally biased stretch (polar residues) spans 322–331 (FPVSTLSPKS).

Belongs to the DHHC palmitoyltransferase family. As to quaternary structure, interacts with IRF3 and STING1; in presence of DNA viruses recruits IRF3 to STING1 promoting IRF3 phosphorylation and activation.

It is found in the endosome membrane. It catalyses the reaction L-cysteinyl-[protein] + hexadecanoyl-CoA = S-hexadecanoyl-L-cysteinyl-[protein] + CoA. Functionally, endoplasmic reticulum-localized palmitoyltransferase that could catalyze the addition of palmitate onto various protein substrates and be involved in a variety of cellular processes. Has a palmitoyltransferase activity toward NCDN and regulates NCDN association with endosome membranes through this palmitoylation. May play a role in cell proliferation. In terms of biological role, also has a palmitoyltransferase activity-independent function in DNA virus-triggered and CGAS-mediated innate immune response. Functions as an adapter that recruits IRF3 to STING1 to promote the activation of that key transcriptional regulator of type I interferon (IFN)-dependent immune response. This is Palmitoyltransferase ZDHHC11 from Mus musculus (Mouse).